Reading from the N-terminus, the 64-residue chain is Epidermal growth factor (64 aa).

The signal sequence occupies residues 1 to 21; the sequence is MMRHLLLVGAAILIFVSDAQA. Residue Gln22 is modified to Pyrrolidone carboxylic acid. Residues 25–61 enclose the EGF-like domain; sequence GEDPCQIVRCSYGANCIAYGDTAICECPFGYSGIRCQ. 3 disulfide bridges follow: Cys29/Cys40, Cys34/Cys49, and Cys51/Cys60.

In terms of tissue distribution, albumen gland. Up-regulated in adult CNS after axotomy.

The protein localises to the secreted. Its function is as follows. Induces neurite outgrowth in specific adult neurons in vitro. The chain is Epidermal growth factor from Lymnaea stagnalis (Great pond snail).